We begin with the raw amino-acid sequence, 280 residues long: Ribosomal RNA small subunit methyltransferase A (280 aa).

The S-adenosyl-L-methionine site is built by Asn18, Leu20, Gly45, Glu66, Asp89, and Asn110.

This sequence belongs to the class I-like SAM-binding methyltransferase superfamily. rRNA adenine N(6)-methyltransferase family. RsmA subfamily.

Its subcellular location is the cytoplasm. It catalyses the reaction adenosine(1518)/adenosine(1519) in 16S rRNA + 4 S-adenosyl-L-methionine = N(6)-dimethyladenosine(1518)/N(6)-dimethyladenosine(1519) in 16S rRNA + 4 S-adenosyl-L-homocysteine + 4 H(+). Its function is as follows. Specifically dimethylates two adjacent adenosines (A1518 and A1519) in the loop of a conserved hairpin near the 3'-end of 16S rRNA in the 30S particle. May play a critical role in biogenesis of 30S subunits. In Cupriavidus necator (strain ATCC 17699 / DSM 428 / KCTC 22496 / NCIMB 10442 / H16 / Stanier 337) (Ralstonia eutropha), this protein is Ribosomal RNA small subunit methyltransferase A.